The chain runs to 347 residues: Histone deacetylase 11 (347 aa).

Residues 14 to 326 are histone deacetylase; it reads TRWPIVYSPR…LNLFGLGLIG (313 aa). Residue histidine 143 is part of the active site.

This sequence belongs to the histone deacetylase family. In terms of assembly, interacts with HDAC6. Weakly expressed in most tissues. Strongly expressed in brain, heart, skeletal muscle, kidney and testis.

The protein localises to the nucleus. It carries out the reaction N(6)-acetyl-L-lysyl-[histone] + H2O = L-lysyl-[histone] + acetate. Its function is as follows. Responsible for the deacetylation of lysine residues on the N-terminal part of the core histones (H2A, H2B, H3 and H4). Histone deacetylation gives a tag for epigenetic repression and plays an important role in transcriptional regulation, cell cycle progression and developmental events. Histone deacetylases act via the formation of large multiprotein complexes. In Homo sapiens (Human), this protein is Histone deacetylase 11 (HDAC11).